A 379-amino-acid chain; its full sequence is DnaJ homolog subfamily B member 14 (379 aa).

The Cytoplasmic portion of the chain corresponds to 1 to 244; the sequence is MEGNRDEAEK…GHEREEERGD (244 aa). The interval 55-94 is disordered; that stretch reads STAGNSPHCRKPSGSGDQSKPNCTKDSTSGSGEGGKGYTK. A compositionally biased stretch (polar residues) spans 69–84; that stretch reads SGDQSKPNCTKDSTSG. The J domain occupies 108–172; sequence NYYEVLGVTK…EKRKQYDLTG (65 aa). Residues 219 to 241 are disordered; the sequence is SNGRAGYSQQHQHRHSGHEREEE. Residues 245–265 traverse the membrane as a helical segment; it reads GGFSVFIQLMPIIVLILVSLL. The Lumenal segment spans residues 266 to 379; it reads SQLMVSNPPY…ERLTSLYKGG (114 aa).

This sequence belongs to the DnaJ family. DNAJB12/DNAJB14 subfamily. In terms of assembly, interacts (via J domain) with HSPA8/Hsc70. Forms a multiprotein complex, at least composed of DNAJB12, DNAJB14, HSPA8/Hsc70 and SGTA; interaction with DNAJB14 and HSPA8/Hsc70 is direct.

Its subcellular location is the endoplasmic reticulum membrane. The protein resides in the nucleus membrane. Its function is as follows. Acts as a co-chaperone with HSPA8/Hsc70; required to promote protein folding and trafficking, prevent aggregation of client proteins, and promote unfolded proteins to endoplasmic reticulum-associated degradation (ERAD) pathway. Acts by determining HSPA8/Hsc70's ATPase and polypeptide-binding activities. Can also act independently of HSPA8/Hsc70: together with DNAJB12, acts as a chaperone that promotes maturation of potassium channels KCND2 and KCNH2 by stabilizing nascent channel subunits and assembling them into tetramers. While stabilization of nascent channel proteins is dependent on HSPA8/Hsc70, the process of oligomerization of channel subunits is independent of HSPA8/Hsc70. When overexpressed, forms membranous structures together with DNAJB12 and HSPA8/Hsc70 within the nucleus; the role of these structures, named DJANGOs, is still unclear. In terms of biological role, (Microbial infection) In case of infection by polyomavirus, involved in the virus endoplasmic reticulum membrane penetration and infection. This Homo sapiens (Human) protein is DnaJ homolog subfamily B member 14.